Consider the following 311-residue polypeptide: MADNIYVVGHKSPDTDSVTSAITYANLKNQLGMKDVVPAAAGEINNETKYVLEYFKIAPPVVLNDATDKKVILVDHNEVGQAVDNIMKADILEIIDHHKIGDIQTGKPIFFHNEPVGATGTIIASMYELNGVAISKEMAGLMMAAILSDTVLFKSPTCTDKDKATVEKLSKICGEDPQKFGMEMLKAKSDIKSKTAKDILFGDFKKFDFSGVKAGVGQIEVMDLADLAPKREEILAEMRKALESEKLDMIVLMLTDVIKEASDLLFVGTAAAKEGFEKAFGGKVTNNSIYKEKVLSRKKQVIPPLESAFKK.

The Mn(2+) site is built by H10, D14, D16, D75, H97, and D149.

It belongs to the PPase class C family. Homodimer. It depends on Mn(2+) as a cofactor.

It catalyses the reaction diphosphate + H2O = 2 phosphate + H(+). The protein is Manganese-dependent inorganic pyrophosphatase (ppaC) of Methanothrix thermoacetophila (strain DSM 6194 / JCM 14653 / NBRC 101360 / PT) (Methanosaeta thermophila).